A 322-amino-acid polypeptide reads, in one-letter code: Phosphatidylserine decarboxylase proenzyme (322 aa).

Catalysis depends on charge relay system; for autoendoproteolytic cleavage activity residues D90, H147, and S254. S254 serves as the catalytic Schiff-base intermediate with substrate; via pyruvic acid; for decarboxylase activity. At S254 the chain carries Pyruvic acid (Ser); by autocatalysis. A disordered region spans residues 293–322 (PDAEPAPLPAEEIEAEHDASPLVDDKKDQV). The segment covering 308 to 322 (EHDASPLVDDKKDQV) has biased composition (basic and acidic residues).

It belongs to the phosphatidylserine decarboxylase family. PSD-B subfamily. Prokaryotic type I sub-subfamily. In terms of assembly, heterodimer of a large membrane-associated beta subunit and a small pyruvoyl-containing alpha subunit. It depends on pyruvate as a cofactor. Post-translationally, is synthesized initially as an inactive proenzyme. Formation of the active enzyme involves a self-maturation process in which the active site pyruvoyl group is generated from an internal serine residue via an autocatalytic post-translational modification. Two non-identical subunits are generated from the proenzyme in this reaction, and the pyruvate is formed at the N-terminus of the alpha chain, which is derived from the carboxyl end of the proenzyme. The autoendoproteolytic cleavage occurs by a canonical serine protease mechanism, in which the side chain hydroxyl group of the serine supplies its oxygen atom to form the C-terminus of the beta chain, while the remainder of the serine residue undergoes an oxidative deamination to produce ammonia and the pyruvoyl prosthetic group on the alpha chain. During this reaction, the Ser that is part of the protease active site of the proenzyme becomes the pyruvoyl prosthetic group, which constitutes an essential element of the active site of the mature decarboxylase.

Its subcellular location is the cell membrane. It carries out the reaction a 1,2-diacyl-sn-glycero-3-phospho-L-serine + H(+) = a 1,2-diacyl-sn-glycero-3-phosphoethanolamine + CO2. Its pathway is phospholipid metabolism; phosphatidylethanolamine biosynthesis; phosphatidylethanolamine from CDP-diacylglycerol: step 2/2. Catalyzes the formation of phosphatidylethanolamine (PtdEtn) from phosphatidylserine (PtdSer). The chain is Phosphatidylserine decarboxylase proenzyme from Escherichia coli (strain 55989 / EAEC).